The primary structure comprises 1505 residues: Phosphatidylinositol 3-kinase C2 domain-containing subunit gamma (1505 aa).

The disordered stretch occupies residues 1–32; that stretch reads MAYNWQTEPNRAEPQEGGHDHQQCHHADQHLS. Basic and acidic residues predominate over residues 10–31; it reads NRAEPQEGGHDHQQCHHADQHL. One can recognise a PI3K-RBD domain in the interval 278–370; sequence PSRLFADTQF…IQLHLQRSRD (93 aa). Positions 540–688 constitute a C2 PI3K-type domain; sequence LHSHLSFTVC…TPLTLQIDFP (149 aa). Positions 703 to 879 constitute a PIK helical domain; sequence RTDHQEPPRE…QELLAALQFC (177 aa). The 279-residue stretch at 948-1226 folds into the PI3K/PI4K catalytic domain; it reads DRDACSYFTS…KIKQSLECFP (279 aa). Positions 954-960 are G-loop; the sequence is YFTSNAL. Positions 1090–1098 are catalytic loop; the sequence is GVCDRHNDN. An activation loop region spans residues 1109–1135; the sequence is HIDFGKFLGHAQTFGGIKRDRAPFIFT. The PX domain maps to 1259-1371; sequence LNKTRTIQRV…SFFLSEHIQQ (113 aa). Positions 1384–1505 constitute a C2 domain; the sequence is HSPDKSPQVQ…KWYPLGNSII (122 aa).

Belongs to the PI3/PI4-kinase family. In terms of tissue distribution, predominantly expressed in normal liver. High levels also found in regenerating liver. Very low levels found in heart and testis.

The protein resides in the membrane. It catalyses the reaction a 1,2-diacyl-sn-glycero-3-phospho-(1D-myo-inositol) + ATP = a 1,2-diacyl-sn-glycero-3-phospho-(1D-myo-inositol-3-phosphate) + ADP + H(+). The enzyme catalyses a 1,2-diacyl-sn-glycero-3-phospho-(1D-myo-inositol 4-phosphate) + ATP = a 1,2-diacyl-sn-glycero-3-phospho-(1D-myo-inositol-3,4-bisphosphate) + ADP + H(+). Its function is as follows. Generates phosphatidylinositol 3-phosphate (PtdIns3P) and phosphatidylinositol 3,4-bisphosphate (PtdIns(3,4)P2) that act as second messengers. May play a role in SDF1A-stimulated chemotaxis. The polypeptide is Phosphatidylinositol 3-kinase C2 domain-containing subunit gamma (Pik3c2g) (Rattus norvegicus (Rat)).